The primary structure comprises 691 residues: MSNKLNKQISTEISECYLKEKPQQSFKKSNEIKMSNELINKISNEISNCYLKEKPQQAKKETKKKSIRSLPTDLPPLKSITPLKSWIFLQCRQMDANGNPLCCGVSGRYTQPGTQCILWQIDENDPSQLWQISKDGHLVSLLAGNYVMDYNNDGTNLAIANGWNNYTSQIWTYNSSTGQIENSNYPNTCLGIKGAFNEPITPTNGTELVIDQPIDNNNLCFQWDLVPSYPLNTILTSPPQAFPTFPGDQNTAFIEISQYLSNVDDIRSQYTNLSVSLPFFQSQMSAMSYPSYLSHEEFDFVRDQLSTEFNYAQEIINLIGNYESFHNELFADNSARLNQLATLCQLEIGSDINAMGSVIQVFSGMMYSILEALPGVGPILGNVLQTAVNIGVAASDGHSTIQPDPFQVALSNLWDTLSTNYEALLSNVSNMETMLLQDWGMMVTTHGLIETLSGPNSLAWQSSMTGDLISAAVPGYEISLLQILMPSKYQIYRYDLANNGNVGLPDDIPSSCLWTDPNDSNITYFIADNETTKVYPDDSLMSLIWGNGVSEQEFFLSANGWNFCMSLLNDNIGSGAPTISNNTSTALNFKIQFSPTQIYNYDVPTHSSNFTTEFDNTAIENSYYQITIYDNTNSWVASISVRVDIFVMRGADVSVLSSSCADGYYLGTPNCLQGSFAHSFTGSINIPIFEN.

Positions 47–174 (SNCYLKEKPQ…NYTSQIWTYN (128 aa)) constitute a Ricin B-type lectin domain.

This sequence belongs to the cup family.

The polypeptide is Putative calcium up-regulated protein I (cupI) (Dictyostelium discoideum (Social amoeba)).